A 176-amino-acid chain; its full sequence is Putative ribosomal protein eS10-like (176 aa).

Residues 104–176 (TLHRSRPETG…CGRGRGQPPQ (73 aa)) are disordered. Over residues 108–139 (SRPETGRPRPKGLEGKRPARLTRREADRDTYR) the composition is skewed to basic and acidic residues.

This sequence belongs to the eukaryotic ribosomal protein eS10 family.

In Homo sapiens (Human), this protein is Putative ribosomal protein eS10-like (RPS10P5).